A 555-amino-acid chain; its full sequence is Methyl-coenzyme M reductase subunit alpha (555 aa).

Glutamine 152 is a binding site for coenzyme F430. Coenzyme B is bound by residues arginine 230, 261 to 262 (KH), and arginine 275. Coenzyme M-binding residues include tyrosine 337 and tyrosine 448.

Belongs to the methyl-coenzyme M reductase alpha subunit family. In terms of assembly, MCR is a hexamer of two alpha, two beta, and two gamma chains, forming a dimer of heterotrimers. It depends on coenzyme F430 as a cofactor.

The protein localises to the cytoplasm. The catalysed reaction is coenzyme B + methyl-coenzyme M = methane + coenzyme M-coenzyme B heterodisulfide. It participates in one-carbon metabolism; methyl-coenzyme M reduction; methane from methyl-coenzyme M: step 1/1. In terms of biological role, component of the methyl-coenzyme M reductase (MCR) I that catalyzes the reductive cleavage of methyl-coenzyme M (CoM-S-CH3 or 2-(methylthio)ethanesulfonate) using coenzyme B (CoB or 7-mercaptoheptanoylthreonine phosphate) as reductant which results in the production of methane and the mixed heterodisulfide of CoB and CoM (CoM-S-S-CoB). This is the final step in methanogenesis. The chain is Methyl-coenzyme M reductase subunit alpha (mcrA) from Methanococcus voltae.